We begin with the raw amino-acid sequence, 103 residues long: Large ribosomal subunit protein bL21 (103 aa).

The protein belongs to the bacterial ribosomal protein bL21 family. As to quaternary structure, part of the 50S ribosomal subunit. Contacts protein L20.

Its function is as follows. This protein binds to 23S rRNA in the presence of protein L20. The sequence is that of Large ribosomal subunit protein bL21 from Alkaliphilus oremlandii (strain OhILAs) (Clostridium oremlandii (strain OhILAs)).